Here is a 1050-residue protein sequence, read N- to C-terminus: Self-sufficient cytochrome P450 monooxygenase CYP505E5 (1050 aa).

Cysteine 405 contributes to the heme binding site. The interval 467 to 491 (RRSMLVARDGSSGESSNHLAEARGD) is disordered. Residues 500-641 (VSFFYGSNSG…DLEAWEETSL (142 aa)) form the Flavodoxin-like domain. FMN contacts are provided by residues 506 to 510 (SNSGT) and 585 to 617 (VFGC…TRLA). Residues 679–907 (KGLIEAKVTA…RPAKESFHLP (229 aa)) form the FAD-binding FR-type domain.

The protein in the N-terminal section; belongs to the cytochrome P450 family. It depends on FAD as a cofactor. Requires FMN as cofactor. The cofactor is heme.

The catalysed reaction is 2 oxidized [cytochrome P450] + NADPH = 2 reduced [cytochrome P450] + NADP(+) + H(+). The enzyme catalyses an organic molecule + reduced [NADPH--hemoprotein reductase] + O2 = an alcohol + oxidized [NADPH--hemoprotein reductase] + H2O + H(+). It carries out the reaction dodecanoate + reduced [NADPH--hemoprotein reductase] + O2 = 5-hydroxydodecanoate + oxidized [NADPH--hemoprotein reductase] + H2O + H(+). It catalyses the reaction tetradecanoate + reduced [NADPH--hemoprotein reductase] + O2 = 7-hydroxytetradecanoate + oxidized [NADPH--hemoprotein reductase] + H2O + H(+). The catalysed reaction is dodecan-1-ol + reduced [NADPH--hemoprotein reductase] + O2 = 1,5-dodecanediol + oxidized [NADPH--hemoprotein reductase] + H2O + H(+). The enzyme catalyses dodecan-1-ol + reduced [NADPH--hemoprotein reductase] + O2 = 1,4-dodecanediol + oxidized [NADPH--hemoprotein reductase] + H2O + H(+). It carries out the reaction dodecan-1-ol + reduced [NADPH--hemoprotein reductase] + O2 = 1,6-dodecanediol + oxidized [NADPH--hemoprotein reductase] + H2O + H(+). Self-sufficient cytochrome P450 monooxygenase that catalyzes the regioselective in-chain hydroxylation of alkanes, fatty alcohols, and fatty acids at the omega-7 position. Performs hydroxylation of C10-C16 n-alkanes and C12 and C14 fatty alcohols; and thereby enables the one step biocatalytic synthesis of rare alcohols such as 5-dodecanol and 7-tetradecanol. Converts 1-dodecanol into 1,5-dodecanediol as major product with very little sub-terminally hydroxylated products with the 1,4-dodecanediol and 1,6-dodecanediol more abundant. Converts dodecanoic acid to 5-hydroxydodecanoic acid which can be further converted into delta-dodecalactone by lactonization of the 5-hydroxy acid at low pH. Also gives sub-terminal hydroxylation of dodecanoic acid with 9-hydroxydodecanoic acid being the second most abundant product. The chain is Self-sufficient cytochrome P450 monooxygenase CYP505E5 from Aspergillus niger.